We begin with the raw amino-acid sequence, 505 residues long: Buccalin (505 aa).

The signal sequence occupies residues 1–25 (MAHHRGHRHILLYVSLALSLGLALA). The propeptide occupies 26–62 (EDATDPSDDTGSFDDVEAVSEEADLDPYSMSQELNKR). Val-74 bears the Valine amide mark. Leucine amide occurs at positions 88 and 102. Gln-106 bears the Pyrrolidone carboxylic acid mark. Isoleucine amide is present on Ile-116. Leucine amide is present on residues Leu-129, Leu-143, Leu-157, Leu-171, Leu-185, Leu-199, Leu-213, Leu-227, Leu-241, Leu-254, Leu-267, Leu-281, Leu-294, Leu-307, Leu-321, and Leu-335. At Glu-349 the chain carries Glutamic acid 1-amide. Leu-363, Leu-377, Leu-391, Leu-405, Leu-419, and Leu-433 each carry leucine amide. An isoleucine amide mark is found at Ile-447 and Ile-461. A Pyrrolidone carboxylic acid modification is found at Gln-465. The segment at 472–505 (SGRLGKRSSSEQEEEDVRQVEKRSTTEEQSSKSL) is disordered. Leu-475 carries the post-translational modification Leucine amide. Residues 488-505 (VRQVEKRSTTEEQSSKSL) are compositionally biased toward basic and acidic residues. A propeptide spanning residues 495–505 (STTEEQSSKSL) is cleaved from the precursor.

Cholinergic motor neuron B15 innervating buccal muscles in Aplysia.

Its subcellular location is the secreted. Modulatory neuropeptide, acting presynaptically on nerve terminals to inhibit acetylcholine release. This is Buccalin from Aplysia californica (California sea hare).